A 506-amino-acid polypeptide reads, in one-letter code: Maturase K (506 aa).

It belongs to the intron maturase 2 family. MatK subfamily.

It is found in the plastid. It localises to the chloroplast. Its function is as follows. Usually encoded in the trnK tRNA gene intron. Probably assists in splicing its own and other chloroplast group II introns. In Trifolium beckwithii (Beckwith's clover), this protein is Maturase K.